The chain runs to 195 residues: Thymidine kinase (195 aa).

ATP-binding positions include 9–16 (STMNAGKS) and 87–90 (DEAQ). Glu-88 acts as the Proton acceptor in catalysis. Zn(2+) is bound by residues Cys-145, Cys-147, Cys-182, and His-185.

This sequence belongs to the thymidine kinase family. As to quaternary structure, homotetramer.

Its subcellular location is the cytoplasm. It catalyses the reaction thymidine + ATP = dTMP + ADP + H(+). This Jannaschia sp. (strain CCS1) protein is Thymidine kinase.